We begin with the raw amino-acid sequence, 510 residues long: ATP synthase subunit alpha (510 aa).

G169 to T176 serves as a coordination point for ATP.

Belongs to the ATPase alpha/beta chains family. In terms of assembly, F-type ATPases have 2 components, CF(1) - the catalytic core - and CF(0) - the membrane proton channel. CF(1) has five subunits: alpha(3), beta(3), gamma(1), delta(1), epsilon(1). CF(0) has four main subunits: a(1), b(1), b'(1) and c(9-12).

It localises to the cell inner membrane. It catalyses the reaction ATP + H2O + 4 H(+)(in) = ADP + phosphate + 5 H(+)(out). Its function is as follows. Produces ATP from ADP in the presence of a proton gradient across the membrane. The alpha chain is a regulatory subunit. The protein is ATP synthase subunit alpha of Rhodospirillum rubrum (strain ATCC 11170 / ATH 1.1.1 / DSM 467 / LMG 4362 / NCIMB 8255 / S1).